The sequence spans 991 residues: Polyribonucleotide nucleotidyltransferase 2, mitochondrial (991 aa).

Residues 1–39 (MSSIVNRASSASLPNFLAWRALGFRTICSGRLGFAPSVP) constitute a mitochondrion transit peptide. One can recognise a KH domain in the interval 609–667 (PRLATLKYSNDSLRTLIGPMGVLKRKIEVETGARLSIDNGTLTIVAKNQDVMEKAQEQV). The S1 motif 1 domain occupies 678-746 (GGVYKGTVSS…VRGNIKLSRK (69 aa)). The tract at residues 813–865 (EAEKSSPVNDNDKPRRAATSKPDRKPKSTASKLIATQKEEEALESIAPEETSA) is disordered. Residues 822-838 (DNDKPRRAATSKPDRKP) show a composition bias toward basic and acidic residues. Positions 925 to 987 (GTEMTATVDH…GVPVMALVDE (63 aa)) constitute an S1 motif 2 domain.

This sequence belongs to the polyribonucleotide nucleotidyltransferase family.

It is found in the mitochondrion. The enzyme catalyses RNA(n+1) + phosphate = RNA(n) + a ribonucleoside 5'-diphosphate. In terms of biological role, involved in the 3'-end maturation of mitochondrial mRNAs, rRNAs and tRNAs. Functions as a poly(A) mRNA 3'-5' degrading phosphorylase and is required for the degradation of highly expressed transcripts of non-coding regions. In Arabidopsis thaliana (Mouse-ear cress), this protein is Polyribonucleotide nucleotidyltransferase 2, mitochondrial (PNP2).